The chain runs to 416 residues: Multifunctional CCA protein (416 aa).

2 residues coordinate ATP: Gly8 and Arg11. 2 residues coordinate CTP: Gly8 and Arg11. Residues Asp21 and Asp23 each contribute to the Mg(2+) site. Positions 91, 137, and 140 each coordinate ATP. The CTP site is built by Arg91, Arg137, and Arg140. One can recognise an HD domain in the interval 228 to 329 (TGLHTMMVLA…IKLFDKADFW (102 aa)).

It belongs to the tRNA nucleotidyltransferase/poly(A) polymerase family. Bacterial CCA-adding enzyme type 1 subfamily. As to quaternary structure, monomer. Can also form homodimers and oligomers. Mg(2+) is required as a cofactor. It depends on Ni(2+) as a cofactor.

It carries out the reaction a tRNA precursor + 2 CTP + ATP = a tRNA with a 3' CCA end + 3 diphosphate. The enzyme catalyses a tRNA with a 3' CCA end + 2 CTP + ATP = a tRNA with a 3' CCACCA end + 3 diphosphate. Catalyzes the addition and repair of the essential 3'-terminal CCA sequence in tRNAs without using a nucleic acid template. Adds these three nucleotides in the order of C, C, and A to the tRNA nucleotide-73, using CTP and ATP as substrates and producing inorganic pyrophosphate. tRNA 3'-terminal CCA addition is required both for tRNA processing and repair. Also involved in tRNA surveillance by mediating tandem CCA addition to generate a CCACCA at the 3' terminus of unstable tRNAs. While stable tRNAs receive only 3'-terminal CCA, unstable tRNAs are marked with CCACCA and rapidly degraded. The sequence is that of Multifunctional CCA protein from Shewanella sp. (strain MR-4).